The chain runs to 218 residues: Cytochrome c biogenesis ATP-binding export protein CcmA (218 aa).

One can recognise an ABC transporter domain in the interval 12 to 217 (LHAEQLSSIR…KLSLEYRGEV (206 aa)). Position 44-51 (44-51 (GPNGAGKS)) interacts with ATP.

It belongs to the ABC transporter superfamily. CcmA exporter (TC 3.A.1.107) family. The complex is composed of two ATP-binding proteins (CcmA) and two transmembrane proteins (CcmB).

Its subcellular location is the cell inner membrane. The enzyme catalyses heme b(in) + ATP + H2O = heme b(out) + ADP + phosphate + H(+). Part of the ABC transporter complex CcmAB involved in the biogenesis of c-type cytochromes; once thought to export heme, this seems not to be the case, but its exact role is uncertain. Responsible for energy coupling to the transport system. The chain is Cytochrome c biogenesis ATP-binding export protein CcmA from Idiomarina loihiensis (strain ATCC BAA-735 / DSM 15497 / L2-TR).